Reading from the N-terminus, the 825-residue chain is Ent-copalyl diphosphate synthase 2, chloroplastic (825 aa).

The N-terminal 70 residues, 1–70 (MVLSSSCTTV…KGSSLTPIVR (70 aa)), are a transit peptide targeting the chloroplast. Lys-241 contributes to the substrate binding site. Residues 373–376 (EVDD) carry the DXDD motif motif. Lys-459 serves as a coordination point for substrate.

The protein belongs to the terpene synthase family. Tpsc subfamily. It depends on Mg(2+) as a cofactor. In terms of tissue distribution, expressed in tassels.

Its subcellular location is the plastid. It is found in the chloroplast. The catalysed reaction is (2E,6E,10E)-geranylgeranyl diphosphate = ent-copalyl diphosphate. It participates in plant hormone biosynthesis; gibberellin biosynthesis. Involved in gibberellin biosynthesis. Catalyzes the conversion of geranylgeranyl diphosphate to the gibberellin precursor ent-copalyl diphosphate (ent-CPP). Involved in the production of antifungal dolabralexin phytoalexins in response to biotic and abiotic stresses. In response to fungal infection and in associtation with KSL4, is involved in the production dolabradiene, a type of antifungal phytoalexin. This is Ent-copalyl diphosphate synthase 2, chloroplastic from Zea mays (Maize).